A 184-amino-acid chain; its full sequence is Protein MEH1 (184 aa).

G2 is lipidated: N-myristoyl glycine. 2 S-palmitoyl cysteine lipidation sites follow: C7 and C8. Residues 30-71 (QGNANDEYDAEQMRLKEHEHEQKLLAREQELRDIVANTNDKL) adopt a coiled-coil conformation. Positions 89 to 147 (LQEALDKRQQEEGGDSREDERSAGDDNLSGHSVPSSGSAQATTHQTAPRTNTFTLLTSP) are disordered. Positions 92-112 (ALDKRQQEEGGDSREDERSAG) are enriched in basic and acidic residues. Residues 117 to 147 (SGHSVPSSGSAQATTHQTAPRTNTFTLLTSP) are compositionally biased toward polar residues. Phosphoserine occurs at positions 146 and 149.

As to quaternary structure, component of the GSE complex composed of GTR1, GTR2, SLM4, MEH1 and LTV1. Component of the EGO complex, at least composed of GTR2, SLM4 and MEH1.

Its subcellular location is the vacuole membrane. Its function is as follows. Component of the GSE complex, a GTPase complex required for intracellular sorting of GAP1 out of the endosome. Component of the EGO complex, a complex involved in the regulation of microautophagy. The polypeptide is Protein MEH1 (MEH1) (Saccharomyces cerevisiae (strain ATCC 204508 / S288c) (Baker's yeast)).